The primary structure comprises 307 residues: Ribonuclease HII (307 aa).

One can recognise an RNase H type-2 domain in the interval 44–235 (EPVAGVDEAG…VRRAGGRMEL (192 aa)). A divalent metal cation is bound by residues D50, E51, and D144. Residues 241–307 (ADSDDSPGFA…SRPAELLEIP (67 aa)) form a disordered region. The span at 250–280 (ASGPAEAVPGPAGSAGAASAAARPAAAGPAG) shows a compositional bias: low complexity. Positions 287-296 (RAADLRDNGD) are enriched in basic and acidic residues.

This sequence belongs to the RNase HII family. Mn(2+) is required as a cofactor. The cofactor is Mg(2+).

The protein resides in the cytoplasm. The enzyme catalyses Endonucleolytic cleavage to 5'-phosphomonoester.. Its function is as follows. Endonuclease that specifically degrades the RNA of RNA-DNA hybrids. The protein is Ribonuclease HII of Acidothermus cellulolyticus (strain ATCC 43068 / DSM 8971 / 11B).